The primary structure comprises 243 residues: 3-deoxy-manno-octulosonate cytidylyltransferase (243 aa).

Belongs to the KdsB family.

It localises to the cytoplasm. It carries out the reaction 3-deoxy-alpha-D-manno-oct-2-ulosonate + CTP = CMP-3-deoxy-beta-D-manno-octulosonate + diphosphate. Its pathway is nucleotide-sugar biosynthesis; CMP-3-deoxy-D-manno-octulosonate biosynthesis; CMP-3-deoxy-D-manno-octulosonate from 3-deoxy-D-manno-octulosonate and CTP: step 1/1. It participates in bacterial outer membrane biogenesis; lipopolysaccharide biosynthesis. Functionally, activates KDO (a required 8-carbon sugar) for incorporation into bacterial lipopolysaccharide in Gram-negative bacteria. The chain is 3-deoxy-manno-octulosonate cytidylyltransferase from Helicobacter pylori (strain G27).